The following is a 194-amino-acid chain: Probable GTP-binding protein EngB (194 aa).

The 173-residue stretch at 22-194 folds into the EngB-type G domain; that stretch reads DLPEYALAGR…AWQFIKEGME (173 aa). Residues 30–37, 57–61, 75–78, 142–145, and 174–176 each bind GTP; these read GRSNVGKS, GKTQT, DVPG, TKAD, and FSS. Mg(2+) contacts are provided by Ser-37 and Thr-59.

It belongs to the TRAFAC class TrmE-Era-EngA-EngB-Septin-like GTPase superfamily. EngB GTPase family. Mg(2+) serves as cofactor.

In terms of biological role, necessary for normal cell division and for the maintenance of normal septation. The sequence is that of Probable GTP-binding protein EngB from Listeria welshimeri serovar 6b (strain ATCC 35897 / DSM 20650 / CCUG 15529 / CIP 8149 / NCTC 11857 / SLCC 5334 / V8).